Here is a 366-residue protein sequence, read N- to C-terminus: Protein-glutamate methylesterase/protein-glutamine glutaminase 2 (366 aa).

A Response regulatory domain is found at 3–119 (RLLIADDSAL…SLELDRLRPL (117 aa)). 4-aspartylphosphate is present on aspartate 53. The disordered stretch occupies residues 149–168 (AASSPRAKAARRGAARQRAK). The segment covering 156 to 166 (KAARRGAARQR) has biased composition (basic residues). Residues 171-363 (PAPGLVLIGT…AAVIEWGNAD (193 aa)) enclose the CheB-type methylesterase domain. Active-site residues include serine 181, histidine 208, and aspartate 305.

Belongs to the CheB family. In terms of processing, phosphorylated by CheA. Phosphorylation of the N-terminal regulatory domain activates the methylesterase activity.

It localises to the cytoplasm. The catalysed reaction is [protein]-L-glutamate 5-O-methyl ester + H2O = L-glutamyl-[protein] + methanol + H(+). It catalyses the reaction L-glutaminyl-[protein] + H2O = L-glutamyl-[protein] + NH4(+). In terms of biological role, involved in chemotaxis. Part of a chemotaxis signal transduction system that modulates chemotaxis in response to various stimuli. Catalyzes the demethylation of specific methylglutamate residues introduced into the chemoreceptors (methyl-accepting chemotaxis proteins or MCP) by CheR. Also mediates the irreversible deamidation of specific glutamine residues to glutamic acid. The polypeptide is Protein-glutamate methylesterase/protein-glutamine glutaminase 2 (Rhodopseudomonas palustris (strain BisB18)).